Here is a 222-residue protein sequence, read N- to C-terminus: UPF0502 protein SO_1867 (222 aa).

Over residues 169 to 193 the composition is skewed to polar residues; it reads EQVSATSLSADSPSADSNSLNAQDR. The interval 169-195 is disordered; that stretch reads EQVSATSLSADSPSADSNSLNAQDRQQ.

The protein belongs to the UPF0502 family.

This is UPF0502 protein SO_1867 from Shewanella oneidensis (strain ATCC 700550 / JCM 31522 / CIP 106686 / LMG 19005 / NCIMB 14063 / MR-1).